We begin with the raw amino-acid sequence, 363 residues long: Src kinase-associated phosphoprotein 1 (363 aa).

The interval 62 to 94 is disordered; the sequence is PFPSDYKEEDGSDDNRSSSLGRSAQSDDASLAS. The segment covering 84–94 has biased composition (low complexity); it reads SAQSDDASLAS. The PH domain maps to 118–221; the sequence is NVLKQGYLEK…WVDQIKIVLR (104 aa). Residues 227 to 273 form a disordered region; sequence VIPVDDEEEEEEEEETYDDIEGEGGPPLPQPLSGTWGRGGDTGAADE. Residues 230-248 are compositionally biased toward acidic residues; it reads VDDEEEEEEEEETYDDIEG. An SH3 domain is found at 301–362; the sequence is EYANYYQGLW…PKDFLHPAYI (62 aa).

The protein belongs to the SKAP family. In terms of assembly, homodimer. Post-translationally, phosphorylated on tyrosines.

The protein resides in the cytoplasm. It localises to the nucleus. The protein localises to the cell membrane. In terms of biological role, positively regulates T-cell receptor signaling. Required for optimal conjugation between T-cells and antigen-presenting cells. This Takifugu rubripes (Japanese pufferfish) protein is Src kinase-associated phosphoprotein 1 (skap1).